The primary structure comprises 45 residues: Peroxidase 3 (45 aa).

It belongs to the peroxidase family. Classical plant (class III) peroxidase subfamily. It depends on heme b as a cofactor. Ca(2+) serves as cofactor.

It localises to the secreted. It catalyses the reaction 2 a phenolic donor + H2O2 = 2 a phenolic radical donor + 2 H2O. Functionally, removal of H(2)O(2), oxidation of toxic reductants, biosynthesis and degradation of lignin, suberization, auxin catabolism, response to environmental stresses such as wounding, pathogen attack and oxidative stress. These functions might be dependent on each isozyme/isoform in each plant tissue. The protein is Peroxidase 3 of Capsicum annuum (Capsicum pepper).